Consider the following 365-residue polypeptide: Mitogen-activated protein kinase p38b (365 aa).

The 288-residue stretch at 24-311 folds into the Protein kinase domain; sequence YQNLQPVGQG…AEQALAHPYM (288 aa). Residues 30–38 and lysine 53 contribute to the ATP site; that span reads VGQGAYGQV. Aspartate 153 functions as the Proton acceptor in the catalytic mechanism. Threonine 183 is subject to Phosphothreonine. The TXY signature appears at 183–185; sequence TGY. Position 185 is a phosphotyrosine (tyrosine 185).

This sequence belongs to the protein kinase superfamily. CMGC Ser/Thr protein kinase family. MAP kinase subfamily. The cofactor is Mg(2+). Dually phosphorylated on Thr-183 and Tyr-185, which activates the enzyme. As to expression, at mid-embryogenesis, highest expression is seen in developing anterior and posterior midguts. Almost ubiquitous expression throughout all development.

The protein resides in the nucleus. The catalysed reaction is L-seryl-[protein] + ATP = O-phospho-L-seryl-[protein] + ADP + H(+). It carries out the reaction L-threonyl-[protein] + ATP = O-phospho-L-threonyl-[protein] + ADP + H(+). Activated by threonine and tyrosine phosphorylation by Mkk3. In terms of biological role, kinase involved in dpp signal transduction pathway in the process of wing morphogenesis when the levels of dpp are enhanced or inhibited. May down-regulate insect immunity gene expression after prolonged infection. In Drosophila melanogaster (Fruit fly), this protein is Mitogen-activated protein kinase p38b.